Reading from the N-terminus, the 400-residue chain is Elongation factor Tu (400 aa).

Residues 10–208 (KPHMNVGTIG…AMDSYFPDPV (199 aa)) enclose the tr-type G domain. Residues 19–26 (GHIDHGKT) form a G1 region. 19–26 (GHIDHGKT) lines the GTP pocket. Residue Thr-26 participates in Mg(2+) binding. Positions 60 to 64 (GITIN) are G2. The G3 stretch occupies residues 81–84 (DCPG). GTP is bound by residues 81 to 85 (DCPGH) and 136 to 139 (NKVD). The G4 stretch occupies residues 136–139 (NKVD). Residues 174 to 176 (SAL) form a G5 region.

The protein belongs to the TRAFAC class translation factor GTPase superfamily. Classic translation factor GTPase family. EF-Tu/EF-1A subfamily. In terms of assembly, monomer.

The protein localises to the cytoplasm. The enzyme catalyses GTP + H2O = GDP + phosphate + H(+). In terms of biological role, GTP hydrolase that promotes the GTP-dependent binding of aminoacyl-tRNA to the A-site of ribosomes during protein biosynthesis. The polypeptide is Elongation factor Tu (Fervidobacterium nodosum (strain ATCC 35602 / DSM 5306 / Rt17-B1)).